The following is a 610-amino-acid chain: Glucoamylase ARB_02327-1 (610 aa).

Residues 1 to 18 form the signal peptide; it reads MRVTSLLWSSLVIPAAVG. A propeptide spanning residues 19 to 24 is cleaved from the precursor; that stretch reads FQVRFK. N-linked (GlcNAc...) asparagine glycosylation occurs at Asn-49. Trp-143 contacts substrate. The N-linked (GlcNAc...) asparagine glycan is linked to Asn-194. The active-site Proton acceptor is Asp-199. Glu-202 acts as the Proton donor in catalysis. 3 disulfides stabilise this stretch: Cys-233-Cys-236, Cys-245-Cys-472, and Cys-285-Cys-293. The 107-residue stretch at 504-610 folds into the CBM20 domain; that stretch reads TALPTKNNVR…SGAIKRDTWR (107 aa).

The protein belongs to the glycosyl hydrolase 15 family.

Its subcellular location is the secreted. It catalyses the reaction Hydrolysis of terminal (1-&gt;4)-linked alpha-D-glucose residues successively from non-reducing ends of the chains with release of beta-D-glucose.. This Arthroderma benhamiae (strain ATCC MYA-4681 / CBS 112371) (Trichophyton mentagrophytes) protein is Glucoamylase ARB_02327-1.